Here is a 372-residue protein sequence, read N- to C-terminus: DNA replication and repair protein RecF (372 aa).

30 to 37 serves as a coordination point for ATP; sequence GENAQGKT.

The protein belongs to the RecF family.

It localises to the cytoplasm. In terms of biological role, the RecF protein is involved in DNA metabolism; it is required for DNA replication and normal SOS inducibility. RecF binds preferentially to single-stranded, linear DNA. It also seems to bind ATP. The chain is DNA replication and repair protein RecF from Exiguobacterium sp. (strain ATCC BAA-1283 / AT1b).